We begin with the raw amino-acid sequence, 144 residues long: Virulence protein STM3117 (144 aa).

The region spanning 23-143 (RIDHLVLTVS…DGNLIEISQY (121 aa)) is the VOC domain.

Is critically involved in promoting the replication of S.typhimurium cells inside host macrophages, suggesting a role in the establishment of bacterial colonization within macrophages. May be involved in the biosynthesis and modification of the peptidoglycan layer of the cell wall. This Salmonella typhimurium (strain LT2 / SGSC1412 / ATCC 700720) protein is Virulence protein STM3117.